The sequence spans 335 residues: Ketol-acid reductoisomerase (NADP(+)) 2 (335 aa).

The 180-residue stretch at 1–180 (MKTYYEKDAN…GCTRAGVIET (180 aa)) folds into the KARI N-terminal Rossmann domain. NADP(+)-binding positions include 24-27 (YGSQ), R47, S51, and 81-84 (DEQQ). The active site involves H106. G132 contacts NADP(+). The KARI C-terminal knotted domain maps to 181–326 (TFQEETETDL…AELREMMSWI (146 aa)). Mg(2+)-binding residues include D189, E193, E225, and E229. S250 contributes to the substrate binding site.

Belongs to the ketol-acid reductoisomerase family. It depends on Mg(2+) as a cofactor.

The catalysed reaction is (2R)-2,3-dihydroxy-3-methylbutanoate + NADP(+) = (2S)-2-acetolactate + NADPH + H(+). The enzyme catalyses (2R,3R)-2,3-dihydroxy-3-methylpentanoate + NADP(+) = (S)-2-ethyl-2-hydroxy-3-oxobutanoate + NADPH + H(+). The protein operates within amino-acid biosynthesis; L-isoleucine biosynthesis; L-isoleucine from 2-oxobutanoate: step 2/4. It functions in the pathway amino-acid biosynthesis; L-valine biosynthesis; L-valine from pyruvate: step 2/4. Its function is as follows. Involved in the biosynthesis of branched-chain amino acids (BCAA). Catalyzes an alkyl-migration followed by a ketol-acid reduction of (S)-2-acetolactate (S2AL) to yield (R)-2,3-dihydroxy-isovalerate. In the isomerase reaction, S2AL is rearranged via a Mg-dependent methyl migration to produce 3-hydroxy-3-methyl-2-ketobutyrate (HMKB). In the reductase reaction, this 2-ketoacid undergoes a metal-dependent reduction by NADPH to yield (R)-2,3-dihydroxy-isovalerate. This chain is Ketol-acid reductoisomerase (NADP(+)) 2, found in Bacillus cereus (strain ZK / E33L).